The following is a 124-amino-acid chain: Large ribosomal subunit protein bL19 (124 aa).

Belongs to the bacterial ribosomal protein bL19 family.

Functionally, this protein is located at the 30S-50S ribosomal subunit interface and may play a role in the structure and function of the aminoacyl-tRNA binding site. This Orientia tsutsugamushi (strain Ikeda) (Rickettsia tsutsugamushi) protein is Large ribosomal subunit protein bL19.